The chain runs to 950 residues: Leucine--tRNA ligase (950 aa).

The 'HIGH' region motif lies at 72–83 (PYPSGEGLHVGH). Residues 722 to 726 (KIGKS) carry the 'KMSKS' region motif. Lysine 725 is a binding site for ATP.

This sequence belongs to the class-I aminoacyl-tRNA synthetase family.

It is found in the cytoplasm. The catalysed reaction is tRNA(Leu) + L-leucine + ATP = L-leucyl-tRNA(Leu) + AMP + diphosphate. The polypeptide is Leucine--tRNA ligase (Mycobacterium sp. (strain JLS)).